We begin with the raw amino-acid sequence, 353 residues long: Paraxanthine methyltransferase 2 (353 aa).

Tyrosine 18 contributes to the S-adenosyl-L-methionine binding site. Residues tyrosine 18 and 21–25 (QSSYQ) contribute to the substrate site. S-adenosyl-L-methionine is bound by residues glycine 59, 59–60 (GC), asparagine 65, 99–102 (FNDL), 128–130 (SFF), and 145–147 (SYA). 146–150 (YAFLF) provides a ligand contact to substrate. 3 residues coordinate Mg(2+): asparagine 167, aspartate 252, and phenylalanine 254. Substrate contacts are provided by serine 301 and tyrosine 306.

Belongs to the methyltransferase superfamily. SABATH family. Homodimer. Mg(2+) serves as cofactor.

This chain is Paraxanthine methyltransferase 2, found in Arabidopsis thaliana (Mouse-ear cress).